Consider the following 944-residue polypeptide: UvrABC system protein A (944 aa).

33–40 is a binding site for ATP; sequence GLSGSGKS. Residues 252 to 279 form a C4-type zinc finger; it reads CPICGFSIGELEPRMFSFNSPFGACPTC. ABC transporter domains follow at residues 309–587 and 607–935; these read WEPT…KKSL and ITDR…QYLK. 639 to 646 provides a ligand contact to ATP; it reads GVSGSGKS. The C4-type zinc finger occupies 738–764; the sequence is CEACKGDGIIKIEMHFLPDVYVPCEVC.

This sequence belongs to the ABC transporter superfamily. UvrA family. As to quaternary structure, forms a heterotetramer with UvrB during the search for lesions.

The protein resides in the cytoplasm. In terms of biological role, the UvrABC repair system catalyzes the recognition and processing of DNA lesions. UvrA is an ATPase and a DNA-binding protein. A damage recognition complex composed of 2 UvrA and 2 UvrB subunits scans DNA for abnormalities. When the presence of a lesion has been verified by UvrB, the UvrA molecules dissociate. This Staphylococcus epidermidis (strain ATCC 35984 / DSM 28319 / BCRC 17069 / CCUG 31568 / BM 3577 / RP62A) protein is UvrABC system protein A.